We begin with the raw amino-acid sequence, 228 residues long: Protein CWC15 homolog A (228 aa).

The tract at residues 1-126 is disordered; the sequence is MTTAARPTFE…DEDSDDDTAA (126 aa). Over residues 24–34 the composition is skewed to polar residues; the sequence is SQLSKQYSSRD. Over residues 52 to 84 the composition is skewed to basic and acidic residues; it reads EEVRSRDFRRELEERERVVARDKNRDRPTREHT. The span at 102-124 shows a compositional bias: acidic residues; sequence DADDPLTDEDGDEDSDEDSDDDT. Residues 121–165 adopt a coiled-coil conformation; it reads DDDTAALLAELEKIKKERAEEKDRKELEQKAEEERIRMENILSGN.

It belongs to the CWC15 family. Identified in the spliceosome C complex. Component of the minor spliceosome, which splices U12-type introns.

The protein localises to the nucleus. Involved in pre-mRNA splicing as component of the spliceosome. The polypeptide is Protein CWC15 homolog A (cwc15-a) (Xenopus laevis (African clawed frog)).